The sequence spans 87 residues: uncharacterized protein (87 aa).

The interval 52–87 (KWQPRPDANNSDTTTSTEDSTTDTETEYSTTEDELA) is disordered. Positions 71–87 (STTDTETEYSTTEDELA) are enriched in acidic residues.

This is an uncharacterized protein from Autographa californica nuclear polyhedrosis virus (AcMNPV).